Here is a 197-residue protein sequence, read N- to C-terminus: MRRLKNLPGLTGTGKSNTSNLGEFRLAVDQSTSRKISQFCVRLEAKQRLRLNYGLTERQLLRYVRIARRTRGSTGQVLLQLLEMRLDNIIFQLGMASTIPAARQLVCHRHILVNHRVVDIPSYRCKPRDIISIRNRPTSANALKSESLSGNEVPDHLTLSISKTGEPTGLVNHLVNRESVNLDINELLVVEYYSRKA.

One can recognise an S4 RNA-binding domain in the interval 84 to 143; the sequence is MRLDNIIFQLGMASTIPAARQLVCHRHILVNHRVVDIPSYRCKPRDIISIRNRPTSANAL.

The protein belongs to the universal ribosomal protein uS4 family. Part of the 30S ribosomal subunit. Contacts protein S5. The interaction surface between S4 and S5 is involved in control of translational fidelity.

The protein resides in the plastid. The protein localises to the chloroplast. One of the primary rRNA binding proteins, it binds directly to 16S rRNA where it nucleates assembly of the body of the 30S subunit. Functionally, with S5 and S12 plays an important role in translational accuracy. This Adiantum capillus-veneris (Maidenhair fern) protein is Small ribosomal subunit protein uS4c (rps4).